The sequence spans 238 residues: SPbeta prophage-derived uncharacterized protein YorM (238 aa).

An N-terminal signal peptide occupies residues 1–37; the sequence is MFKKLIDKHKKYVYHRINKMALFATIGLLGVGLVYSA. Over residues 111–121 the composition is skewed to basic residues; sequence TKTKKVQKTNT. A disordered region spans residues 111–132; that stretch reads TKTKKVQKTNTKRNLDKAVSKS.

The protein is SPbeta prophage-derived uncharacterized protein YorM (yorM) of Bacillus subtilis (strain 168).